The sequence spans 383 residues: AP-1-like transcription factor YAP6 (383 aa).

Disordered stretches follow at residues 1-64, 83-113, and 168-239; these read MQNP…ISVN, DYRSMHQSPIHPSYIIPPHSNERKQSASYNR, and TLPS…KAFR. Residues 13 to 64 are compositionally biased toward polar residues; the sequence is NQGSSSMATYNASEKNLNEHPSPQIAQPSTSQKLPYRINPTTTNGDTDISVN. Residues 88–101 are compositionally biased toward low complexity; sequence HQSPIHPSYIIPPH. The segment covering 168-184 has biased composition (polar residues); that stretch reads TLPSRNTSVTTAPPSFQ. Residues 185–206 are compositionally biased toward low complexity; that stretch reads NSADTAKNSADNNDNNDNVTKP. Polar residues predominate over residues 213–222; sequence QLISSSGKTL. Residues 221 to 284 form the bZIP domain; sequence TLRNTRRAAQ…NDNNILIAQH (64 aa). The basic motif stretch occupies residues 223-247; it reads RNTRRAAQNRTAQKAFRQRKEKYIK. Positions 227–237 are enriched in low complexity; the sequence is RAAQNRTAQKA. Residues 249–277 are leucine-zipper; that stretch reads LEQKSKIFDDLLAENNNFKSLNDSLRNDN.

It belongs to the bZIP family. YAP subfamily. As to quaternary structure, homodimer.

It localises to the nucleus. In terms of biological role, transcription activator involved in the regulation of genes expressed in response to environmental changes and metabolic requirements. According to genome-wide promoter binding and gene expression studies it regulates, among others, genes involved in ribosome biogenesis, protein synthesis, carbohydrate metabolism, and carbohydrate transport. It may also be involved in pleiotropic drug resistance. When overexpressed, it confers resistance to cisplatin, methylmethanosulfonate, and mitomycin C, and increases cellular tolerance to sodium and lithium. The sequence is that of AP-1-like transcription factor YAP6 (YAP6) from Saccharomyces cerevisiae (strain ATCC 204508 / S288c) (Baker's yeast).